The primary structure comprises 246 residues: Enolase-phosphatase E1 (246 aa).

D11 and E13 together coordinate Mg(2+). Residues 140–141 (SS) and K174 each bind substrate. Residue D199 participates in Mg(2+) binding.

It belongs to the HAD-like hydrolase superfamily. MasA/MtnC family. Monomer. Mg(2+) serves as cofactor.

It is found in the cytoplasm. It localises to the nucleus. It carries out the reaction 5-methylsulfanyl-2,3-dioxopentyl phosphate + H2O = 1,2-dihydroxy-5-(methylsulfanyl)pent-1-en-3-one + phosphate. It functions in the pathway amino-acid biosynthesis; L-methionine biosynthesis via salvage pathway; L-methionine from S-methyl-5-thio-alpha-D-ribose 1-phosphate: step 3/6. Its pathway is amino-acid biosynthesis; L-methionine biosynthesis via salvage pathway; L-methionine from S-methyl-5-thio-alpha-D-ribose 1-phosphate: step 4/6. In terms of biological role, bifunctional enzyme that catalyzes the enolization of 2,3-diketo-5-methylthiopentyl-1-phosphate (DK-MTP-1-P) into the intermediate 2-hydroxy-3-keto-5-methylthiopentenyl-1-phosphate (HK-MTPenyl-1-P), which is then dephosphorylated to form the acireductone 1,2-dihydroxy-3-keto-5-methylthiopentene (DHK-MTPene). This is Enolase-phosphatase E1 from Acyrthosiphon pisum (Pea aphid).